A 1181-amino-acid polypeptide reads, in one-letter code: MESMPSFLKDTPAWEKTAPVNGIVGQEPGTSPQDGLHHGALCLGEPVPFWRGVLSAPDSWLPPGFLQGPKDTLSVVEGEGSRNGERKANWLGSKEGLRWKEAMLAHPLAFCGPACPPRYGPLIPEHSSGHPKSDPVAFRPLHCPFLLETKILERAPFWVPTCLPPYLMSSLPPERSYDWPLAPSPWVYSGSQPKVPSAFSLGSKGFYHKDPNILRPAKEPLAASESGMLGLAPGGHLQQACDAEGPSLHQRDGETGAGRQQNLCPVFLGYPDTVPRTPWPSCPPGLVHTLGNVWAGPGSNSFGYQLGPPVTPRCPSPGPPTPPGGCCSSHLPAREGDPGPCRKCQDSPEGSSSGPGESSEERNKAGSRASPPSHHTKLKKTWLTRHSEQFECPGGCPGKGESPATGLRALKRAGSPEVQGARGPAPKRPSHTFPGTGRQGARAWQETPETSTGSKAEAQQQEEQRGPRDGRIRLRESRLEDTSCQHHLAGVTQCPSCVQAAGEVEILTSHSQKSHKLPLEEKPLEEDSCATSEEGGGSSPEASINKGLAKHLLSGLGDRLCRLLRKEREALAWAQREGQGPAMTEDSPGIPHCCSRCHHGLFNTHWRCSHCSHRLCVACGRIAGAGKNREKTGSREQRTDDCAQEAGHAACSLILTQFVSSQALAELSTVMHQVWAKFDIRGHCFCQVDARVWAPGDGGQQKEPTEKTPPAPQLSCNGDSNRTKDIKEETPDSTESPAEDRAGRSPLPCPSLCELLASTAVKLCLGHERIHMAFAPVTPALPSDDRITNILDSIIAQVVERKIQEKALGPGLRAGSGLRKGLSLPLSPVRTQLSPPGALLWLQEPRPKHGFRLFQEHWRQGQPVLVSGIQKTLRLSLWGMEALGTLGGQVQTLTALGPPQPTSLDSTAFWKGFSHPEARPKLDEGSVLLLHRPLGDKDESRVENLASSLPLPEYCAHQGKLNLASYLPLGLTLHPLEPQLWAAYGVNSHRGHLGTKNLCVEVSDLISILVHAEAQLPPWYRAQKDFLSGLDGEGLWSPGSQTSTVWHVFRAQDAQRIRRFLQMVCPAGAGTLEPGAPGSCYLDSGLRRRLREEWGVSCWTLLQAPGEAVLVPAGAPHQVQGLVSTISVTQHFLSPETSALSAQLCHQGASLPPDHRMLYAQMDRAVFQAVKVAVGTLQEAK.

Residues 311–323 (TPRCPSPGPPTPP) are compositionally biased toward pro residues. 3 disordered regions span residues 311–378 (TPRC…HTKL), 413–472 (AGSP…DGRI), and 509–543 (SHSQ…PEAS). Residues 347–357 (SPEGSSSGPGE) show a composition bias toward low complexity. Residues 447-461 (TPETSTGSKAEAQQQ) are compositionally biased toward polar residues. Residues 462 to 472 (EEQRGPRDGRI) show a composition bias toward basic and acidic residues. The LXXLL motif 1 signature appears at 560–564 (LCRLL). The C6-type zinc-finger motif lies at 594 to 619 (CSRCHHGLFNTHWRCSHCSHRLCVAC). The interval 696–745 (GDGGQQKEPTEKTPPAPQLSCNGDSNRTKDIKEETPDSTESPAEDRAGRS) is disordered. Residues 721 to 730 (NRTKDIKEET) show a composition bias toward basic and acidic residues. The LXXLL motif 2 signature appears at 752–756 (LCELL). Positions 938–1149 (DESRVENLAS…LSAQLCHQGA (212 aa)) constitute a JmjC domain. Fe cation-binding residues include C999, E1001, and H1117.

It depends on Fe(2+) as a cofactor.

The protein resides in the nucleus. It carries out the reaction N(6),N(6)-dimethyl-L-lysyl(9)-[histone H3] + 2 2-oxoglutarate + 2 O2 = L-lysyl(9)-[histone H3] + 2 formaldehyde + 2 succinate + 2 CO2. Histone demethylase that specifically demethylates both mono- and dimethylated 'Lys-9' of histone H3. May act as a transcription regulator controlling hair biology (via targeting of collagens), neural activity, and cell cycle. This is Lysine-specific demethylase hairless (Hr) from Rattus norvegicus (Rat).